We begin with the raw amino-acid sequence, 471 residues long: Ubiquitin carboxyl-terminal hydrolase calypso (471 aa).

A UCH catalytic domain is found at 45-276; that stretch reads GWLELESDPG…IRFNLMAVVP (232 aa). Residue Cys131 is the Nucleophile of the active site. His213 acts as the Proton donor in catalysis. Residues 375–403 enclose the ULD domain; sequence NYDKFICTFLSMLAHQGVLGELVSQHLLP. Residues 405 to 471 form a positively charged C-terminal tail required for binding nucleosomes region; sequence KKVSGQGAAN…KGRNKCRKRK (67 aa). The tract at residues 410–471 is disordered; it reads QGAANRISKQ…KGRNKCRKRK (62 aa). Low complexity predominate over residues 420-447; that stretch reads STTASAGGSTTGATASTPKTQQQQAAAA. A compositionally biased stretch (basic residues) spans 457–471; it reads PGRRRKGRNKCRKRK.

Belongs to the peptidase C12 family. BAP1 subfamily. Catalytic component of the polycomb repressive deubiquitinase (PR-DUB) complex, at least composed of caly/calypso, Asx and sba (MBD5/6 homolog). The PR-DUB complex associates with nucleosomes to mediate deubiquitination of histone H2AK118ub1 substrates; the association requires the positively charged C-terminal tail of caly, probably due to direct binding of DNA. Interacts (via ULD domain) with Asx (via DEUBAD domain); the interaction produces a stable heterodimer with a composite binding site for ubiquitin. Homodimerizes (via coiled-coil hinge-region between the UCH and ULD domains) to mediate assembly of 2 copies of the caly-Asx heterodimer into a bisymmetric tetramer; dimerization enhances PR-DUB association with nucleosomes.

It is found in the nucleus. The enzyme catalyses Thiol-dependent hydrolysis of ester, thioester, amide, peptide and isopeptide bonds formed by the C-terminal Gly of ubiquitin (a 76-residue protein attached to proteins as an intracellular targeting signal).. Catalytic component of the polycomb repressive deubiquitinase (PR-DUB) complex, a complex that specifically mediates deubiquitination of histone H2A monoubiquitinated at 'Lys-119' (H2AK118ub1). Mediates bisymmetric organization of the PR-DUB complex and is involved in association with nucleosomes to mediate deubiquitination. Does not deubiquitinate monoubiquitinated histone H2B. Required to maintain the transcriptionally repressive state of homeotic genes throughout development. The PR-DUB complex has weak or no activity toward 'Lys-48'- and 'Lys-63'-linked polyubiquitin chains. Polycomb group (PcG) protein. This chain is Ubiquitin carboxyl-terminal hydrolase calypso, found in Drosophila yakuba (Fruit fly).